We begin with the raw amino-acid sequence, 164 residues long: Coenzyme Q-binding protein coq10, mitochondrial (164 aa).

Belongs to the COQ10 family. In terms of assembly, interacts with coenzyme Q.

The protein resides in the mitochondrion inner membrane. Required for the function of coenzyme Q in the respiratory chain. May serve as a chaperone or may be involved in the transport of Q6 from its site of synthesis to the catalytic sites of the respiratory complexes. This is Coenzyme Q-binding protein coq10, mitochondrial from Schizosaccharomyces pombe (strain 972 / ATCC 24843) (Fission yeast).